The primary structure comprises 504 residues: Cytochrome P450 3A2 (504 aa).

Cysteine 443 serves as a coordination point for heme.

It belongs to the cytochrome P450 family. Heme serves as cofactor. As to expression, expressed in liver.

The protein localises to the endoplasmic reticulum membrane. Its subcellular location is the microsome membrane. It catalyses the reaction an organic molecule + reduced [NADPH--hemoprotein reductase] + O2 = an alcohol + oxidized [NADPH--hemoprotein reductase] + H2O + H(+). In terms of biological role, cytochromes P450 are a group of heme-thiolate monooxygenases. In liver microsomes, this enzyme is involved in an NADPH-dependent electron transport pathway. It oxidizes a variety of structurally unrelated compounds, including steroids, fatty acids, and xenobiotics. The polypeptide is Cytochrome P450 3A2 (Cyp3a2) (Rattus norvegicus (Rat)).